The chain runs to 671 residues: DNA ligase (671 aa).

NAD(+) contacts are provided by residues 34 to 38 (DSEYD), 83 to 84 (SL), and Glu-113. Residue Lys-115 is the N6-AMP-lysine intermediate of the active site. 4 residues coordinate NAD(+): Arg-136, Glu-170, Lys-286, and Lys-310. Cys-404, Cys-407, Cys-422, and Cys-427 together coordinate Zn(2+). The BRCT domain maps to 590 to 671 (EEAGVFAGKT…FTQAVEQSEQ (82 aa)).

The protein belongs to the NAD-dependent DNA ligase family. LigA subfamily. It depends on Mg(2+) as a cofactor. Mn(2+) serves as cofactor.

The catalysed reaction is NAD(+) + (deoxyribonucleotide)n-3'-hydroxyl + 5'-phospho-(deoxyribonucleotide)m = (deoxyribonucleotide)n+m + AMP + beta-nicotinamide D-nucleotide.. Functionally, DNA ligase that catalyzes the formation of phosphodiester linkages between 5'-phosphoryl and 3'-hydroxyl groups in double-stranded DNA using NAD as a coenzyme and as the energy source for the reaction. It is essential for DNA replication and repair of damaged DNA. The sequence is that of DNA ligase from Shouchella clausii (strain KSM-K16) (Alkalihalobacillus clausii).